The sequence spans 429 residues: 3-phosphoshikimate 1-carboxyvinyltransferase (429 aa).

Residues Lys-25, Ser-26, and Arg-30 each coordinate 3-phosphoshikimate. Lys-25 is a binding site for phosphoenolpyruvate. Positions 99 and 127 each coordinate phosphoenolpyruvate. 3-phosphoshikimate contacts are provided by Ser-173, Ser-174, Gln-175, Ser-201, Asp-317, Asn-340, and Lys-344. Phosphoenolpyruvate is bound at residue Gln-175. Asp-317 functions as the Proton acceptor in the catalytic mechanism. Phosphoenolpyruvate-binding residues include Arg-348, Arg-390, and Lys-415.

It belongs to the EPSP synthase family. Monomer.

Its subcellular location is the cytoplasm. The catalysed reaction is 3-phosphoshikimate + phosphoenolpyruvate = 5-O-(1-carboxyvinyl)-3-phosphoshikimate + phosphate. It functions in the pathway metabolic intermediate biosynthesis; chorismate biosynthesis; chorismate from D-erythrose 4-phosphate and phosphoenolpyruvate: step 6/7. Its function is as follows. Catalyzes the transfer of the enolpyruvyl moiety of phosphoenolpyruvate (PEP) to the 5-hydroxyl of shikimate-3-phosphate (S3P) to produce enolpyruvyl shikimate-3-phosphate and inorganic phosphate. The chain is 3-phosphoshikimate 1-carboxyvinyltransferase from Pseudoalteromonas atlantica (strain T6c / ATCC BAA-1087).